The sequence spans 271 residues: Bifunctional protein FolD (271 aa).

NADP(+)-binding positions include 154–156, Ser181, and Ile222; that span reads GRS.

It belongs to the tetrahydrofolate dehydrogenase/cyclohydrolase family. In terms of assembly, homodimer.

It catalyses the reaction (6R)-5,10-methylene-5,6,7,8-tetrahydrofolate + NADP(+) = (6R)-5,10-methenyltetrahydrofolate + NADPH. The enzyme catalyses (6R)-5,10-methenyltetrahydrofolate + H2O = (6R)-10-formyltetrahydrofolate + H(+). It functions in the pathway one-carbon metabolism; tetrahydrofolate interconversion. Functionally, catalyzes the oxidation of 5,10-methylenetetrahydrofolate to 5,10-methenyltetrahydrofolate and then the hydrolysis of 5,10-methenyltetrahydrofolate to 10-formyltetrahydrofolate. The chain is Bifunctional protein FolD from Thermotoga sp. (strain RQ2).